The sequence spans 414 residues: Serine/threonine transporter SstT (414 aa).

The Cytoplasmic portion of the chain corresponds to 2-15 (TTQRSPGLFRRLAH). A helical membrane pass occupies residues 16 to 36 (GSLVKQILVGLVLGILLAWIS). Residues 37–45 (KPAAEAVGL) are Periplasmic-facing. Residues 46 to 66 (LGTLFVGALKAVAPILVLMLV) form a helical membrane-spanning segment. Topologically, residues 67 to 83 (MASIANHQHGQKTNIRP) are cytoplasmic. A helical transmembrane segment spans residues 84 to 104 (ILFLYLLGTFSAALAAVVFSF). Topologically, residues 105–142 (AFPSTLHLSSSAGDISPPSGIVEVMRGLVMSMVSNPID) are periplasmic. A helical membrane pass occupies residues 143 to 163 (ALLKGNYIGILVWAIGLGFAL). Residues 164–179 (RHGNETTKNLVNDMSN) lie on the Cytoplasmic side of the membrane. The helical transmembrane segment at 180–200 (AVTFMVKLVIRFAPFGIFGLV) threads the bilayer. Residues 201-217 (SSTLATTGFSTLWGYAQ) lie on the Periplasmic side of the membrane. The chain crosses the membrane as a helical span at residues 218-238 (LLVVLVGCMLLVALVVNPLLV). Over 239 to 299 (WWKIRRNPFP…VSIPLGATIN (61 aa)) the chain is Cytoplasmic. The helical transmembrane segment at 300–320 (MAGAAITITVLTLAAVNTLGI) threads the bilayer. Topologically, residues 321 to 331 (PVDLPTALLLS) are periplasmic. The chain crosses the membrane as a helical span at residues 332–352 (VVASLCACGASGVAGGSLLLI). The Cytoplasmic segment spans residues 353–414 (PLACNMFGIS…DRLANSALRN (62 aa)).

The protein belongs to the dicarboxylate/amino acid:cation symporter (DAACS) (TC 2.A.23) family.

It localises to the cell inner membrane. The catalysed reaction is L-serine(in) + Na(+)(in) = L-serine(out) + Na(+)(out). It catalyses the reaction L-threonine(in) + Na(+)(in) = L-threonine(out) + Na(+)(out). In terms of biological role, involved in the import of serine and threonine into the cell, with the concomitant import of sodium (symport system). This is Serine/threonine transporter SstT from Shigella flexneri.